The following is a 515-amino-acid chain: ADP,ATP carrier protein 1 (515 aa).

12 helical membrane passes run 24–44 (LKKV…YTVL), 62–82 (AIPF…MLIY), 93–113 (ALFY…PTVI), 124–144 (EFAD…VAIL), 149–169 (FAAF…LMFW), 184–204 (FYAL…RAIV), 226–246 (LLMA…WWIN), 286–306 (YILL…LIEV), 329–349 (FSFW…GNVI), 358–378 (ALVT…LVIF), 383–403 (SGLV…VGAI), and 465–485 (IGAM…IWLV).

This sequence belongs to the ADP/ATP translocase tlc family.

The protein resides in the cell membrane. This is ADP,ATP carrier protein 1 (tlcA) from Chlamydia pneumoniae (Chlamydophila pneumoniae).